Here is a 372-residue protein sequence, read N- to C-terminus: Queuine tRNA-ribosyltransferase (372 aa).

Residue aspartate 92 is the Proton acceptor of the active site. Substrate-binding positions include 92-96 (DSGGY), aspartate 146, glutamine 188, and glycine 215. An RNA binding region spans residues 246–252 (GIGSLRE). Aspartate 265 serves as the catalytic Nucleophile. The tract at residues 270–274 (TRLGR) is RNA binding; important for wobble base 34 recognition. The Zn(2+) site is built by cysteine 303, cysteine 305, cysteine 308, and histidine 334.

The protein belongs to the queuine tRNA-ribosyltransferase family. As to quaternary structure, homodimer. Within each dimer, one monomer is responsible for RNA recognition and catalysis, while the other monomer binds to the replacement base PreQ1. Requires Zn(2+) as cofactor.

It carries out the reaction 7-aminomethyl-7-carbaguanine + guanosine(34) in tRNA = 7-aminomethyl-7-carbaguanosine(34) in tRNA + guanine. It functions in the pathway tRNA modification; tRNA-queuosine biosynthesis. Its function is as follows. Catalyzes the base-exchange of a guanine (G) residue with the queuine precursor 7-aminomethyl-7-deazaguanine (PreQ1) at position 34 (anticodon wobble position) in tRNAs with GU(N) anticodons (tRNA-Asp, -Asn, -His and -Tyr). Catalysis occurs through a double-displacement mechanism. The nucleophile active site attacks the C1' of nucleotide 34 to detach the guanine base from the RNA, forming a covalent enzyme-RNA intermediate. The proton acceptor active site deprotonates the incoming PreQ1, allowing a nucleophilic attack on the C1' of the ribose to form the product. After dissociation, two additional enzymatic reactions on the tRNA convert PreQ1 to queuine (Q), resulting in the hypermodified nucleoside queuosine (7-(((4,5-cis-dihydroxy-2-cyclopenten-1-yl)amino)methyl)-7-deazaguanosine). This chain is Queuine tRNA-ribosyltransferase, found in Prochlorococcus marinus (strain MIT 9211).